We begin with the raw amino-acid sequence, 151 residues long: Large ribosomal subunit protein bL9 (151 aa).

It belongs to the bacterial ribosomal protein bL9 family.

In terms of biological role, binds to the 23S rRNA. In Chlorobium chlorochromatii (strain CaD3), this protein is Large ribosomal subunit protein bL9.